The primary structure comprises 920 residues: Zinc finger MIZ domain-containing protein 2 (920 aa).

2 disordered regions span residues 1–22 and 54–79; these read MNSMNPMKPALPPAPHGDGSFA and SQVLGNPMGPAGSPSGSSMMPGVAGG. Residues 60–79 are compositionally biased toward low complexity; it reads PMGPAGSPSGSSMMPGVAGG. Arginine 111 is modified (omega-N-methylarginine). Disordered regions lie at residues 243–265 and 286–391; these read GQRLPQHGYPGPPQAQPLPRQGV and PSTA…SPNQ. Arginine 245 and arginine 262 each carry asymmetric dimethylarginine. The span at 295–304 shows a compositional bias: pro residues; the sequence is PGQPPAPSPS. The span at 334–354 shows a compositional bias: polar residues; sequence EQFNGQGASFNGGSVSYSQPG. Over residues 366-379 the composition is skewed to pro residues; that stretch reads PSSPLPGNPTPPMT. Low complexity predominate over residues 380–389; that stretch reads PSSSVPYMSP. Residues lysine 402 and lysine 457 each participate in a glycyl lysine isopeptide (Lys-Gly) (interchain with G-Cter in SUMO2) cross-link. Residues 435–506 form an interaction with AR region; the sequence is PFRLQHNLAV…TIERGDNKTS (72 aa). Residues 585-671 form an SP-RING-type zinc finger; it reads GEDGVEQTAI…IYIQNSDYEE (87 aa). Zn(2+)-binding residues include cysteine 616, histidine 618, cysteine 639, and cysteine 642. Lysine 692 participates in a covalent cross-link: Glycyl lysine isopeptide (Lys-Gly) (interchain with G-Cter in SUMO2). Residues 803–920 form a disordered region; that stretch reads SQMAPAGHLD…DDLLSLFENN (118 aa). Residues 876 to 890 show a composition bias toward low complexity; that stretch reads AGEAPEPALDLLPEL. Polar residues predominate over residues 906 to 920; that stretch reads PTNNNDDLLSLFENN.

As to quaternary structure, interacts with AR, SMARCA4/BRG1 and SMARCE1/BAF57. Interaction with either SMARCA4 and SMARCE1 enhances AR-mediated transcription. In terms of tissue distribution, expressed most abundantly in testis with lower levels in heart, brain, pancreas, prostate and ovary.

The protein resides in the nucleus. Increases ligand-dependent transcriptional activity of AR and other nuclear hormone receptors. This chain is Zinc finger MIZ domain-containing protein 2 (ZMIZ2), found in Homo sapiens (Human).